Here is a 268-residue protein sequence, read N- to C-terminus: NAC domain-containing protein 41 (268 aa).

The region spanning 15–160 (LPPGFRFHPT…NWVLCRVFLK (146 aa)) is the NAC domain. Residues 109 to 166 (VGMKKTLVFYKGKPPNGTRTNWVLHEYRLVDSQQDSLYGQNMNWVLCRVFLKKRSNSN) mediate DNA binding. Residues 166–190 (NSKRKEDEKEEVENEKETETERERE) are disordered. Over residues 180 to 190 (EKETETERERE) the composition is skewed to basic and acidic residues.

It localises to the nucleus. Functionally, transcription activator of the mannan synthase CSLA9. Recognizes and binds to DNA-specific sequence of CSLA9 promoter. This Arabidopsis thaliana (Mouse-ear cress) protein is NAC domain-containing protein 41.